A 189-amino-acid chain; its full sequence is Adenylate kinase (189 aa).

G12–T17 contributes to the ATP binding site. The tract at residues S33 to V62 is NMP. AMP contacts are provided by residues T34, R39, N60–V62, G87–R90, and Q94. Residues G129–D135 form an LID region. R130 is a binding site for ATP. R132 and R144 together coordinate AMP. An ATP-binding site is contributed by R172.

Belongs to the adenylate kinase family. In terms of assembly, monomer.

The protein resides in the cytoplasm. It carries out the reaction AMP + ATP = 2 ADP. It functions in the pathway purine metabolism; AMP biosynthesis via salvage pathway; AMP from ADP: step 1/1. Its function is as follows. Catalyzes the reversible transfer of the terminal phosphate group between ATP and AMP. Plays an important role in cellular energy homeostasis and in adenine nucleotide metabolism. This Campylobacter concisus (strain 13826) protein is Adenylate kinase.